A 354-amino-acid chain; its full sequence is Magnesium-protoporphyrin IX monomethyl ester [oxidative] cyclase (354 aa).

The protein belongs to the AcsF family. Fe cation is required as a cofactor.

Its subcellular location is the plastid. It is found in the chloroplast. The enzyme catalyses Mg-protoporphyrin IX 13-monomethyl ester + 3 NADPH + 3 O2 + 2 H(+) = 3,8-divinyl protochlorophyllide a + 3 NADP(+) + 5 H2O. It functions in the pathway porphyrin-containing compound metabolism; chlorophyll biosynthesis (light-independent). Its function is as follows. Catalyzes the formation of the isocyclic ring in chlorophyll biosynthesis. Mediates the cyclase reaction, which results in the formation of divinylprotochlorophyllide (Pchlide) characteristic of all chlorophylls from magnesium-protoporphyrin IX 13-monomethyl ester (MgPMME). The protein is Magnesium-protoporphyrin IX monomethyl ester [oxidative] cyclase of Cyanidium caldarium (Red alga).